Consider the following 109-residue polypeptide: Large ribosomal subunit protein uL24 (109 aa).

This sequence belongs to the universal ribosomal protein uL24 family. In terms of assembly, part of the 50S ribosomal subunit.

In terms of biological role, one of two assembly initiator proteins, it binds directly to the 5'-end of the 23S rRNA, where it nucleates assembly of the 50S subunit. Functionally, one of the proteins that surrounds the polypeptide exit tunnel on the outside of the subunit. The chain is Large ribosomal subunit protein uL24 from Legionella pneumophila subsp. pneumophila (strain Philadelphia 1 / ATCC 33152 / DSM 7513).